Reading from the N-terminus, the 980-residue chain is Envelope glycoprotein B (980 aa).

Over residues 1-14 (MSSGCRSVGGSTWG) the composition is skewed to polar residues. 2 disordered regions span residues 1–20 (MSSG…RGDG) and 88–118 (TTPS…TETP). The signal sequence occupies residues 1 to 86 (MSSGCRSVGG…LFGSCVVRAV (86 aa)). The Virion surface segment spans residues 87-849 (PTTPSPPTST…SGIASFLNNP (763 aa)). Residues 96 to 118 (TPTSMSTHSHGTVDPTLLPTETP) are compositionally biased toward low complexity. Intrachain disulfides connect Cys-140/Cys-647, Cys-157/Cys-603, Cys-231/Cys-296, Cys-389/Cys-437, and Cys-668/Cys-708. Asn-165 carries N-linked (GlcNAc...) asparagine; by host glycosylation. The interval 197–203 (VWKGYSH) is involved in fusion and/or binding to host membrane. N-linked (GlcNAc...) asparagine; by host glycosylation occurs at Asn-275. Positions 282–290 (GWMPWRHYT) are involved in fusion and/or binding to host membrane. Residues Asn-380, Asn-423, Asn-497, Asn-514, Asn-515, and Asn-560 are each glycosylated (N-linked (GlcNAc...) asparagine; by host). A compositionally biased stretch (low complexity) spans 505 to 516 (LLNPNANNNNNT). Residues 505-535 (LLNPNANNNNNTTRRRRSLLSVPEPQPTQDG) are disordered. N-linked (GlcNAc...) asparagine; by host glycosylation is found at Asn-727 and Asn-749. Hydrophobic membrane proximal region regions lie at residues 794–847 (IDSV…SFLN) and 823–843 (AVGT…SGIA). Residues 850–870 (FGGLAIGLLVIAGLVAAFFAY) form a helical membrane-spanning segment. At 871–980 (RYVMQIRSNP…NDTMENEKMV (110 aa)) the chain is on the intravirion side. A Golgi targeting motif is present at residues 925 to 928 (YMSM). Asn-952 carries N-linked (GlcNAc...) asparagine; by host glycosylation. The short motif at 965–968 (YTRL) is the Internalization motif element. A glycan (N-linked (GlcNAc...) asparagine; by host) is linked at Asn-971.

This sequence belongs to the herpesviridae glycoprotein B family. As to quaternary structure, homotrimer; disulfide-linked. Binds to heparan sulfate proteoglycans. Interacts with gH/gL heterodimer. A proteolytic cleavage by host furin generates two subunits that remain linked by disulfide bonds.

It localises to the virion membrane. The protein localises to the host cell membrane. The protein resides in the host endosome membrane. It is found in the host Golgi apparatus membrane. Envelope glycoprotein that forms spikes at the surface of virion envelope. Essential for the initial attachment to heparan sulfate moieties of the host cell surface proteoglycans. Involved in fusion of viral and cellular membranes leading to virus entry into the host cell. Following initial binding to its host receptors, membrane fusion is mediated by the fusion machinery composed at least of gB and the heterodimer gH/gL. May be involved in the fusion between the virion envelope and the outer nuclear membrane during virion egress. The chain is Envelope glycoprotein B from Equine herpesvirus 1 (strain HVS25A) (EHV-1).